The primary structure comprises 468 residues: A-type ATP synthase subunit B (468 aa).

Belongs to the ATPase alpha/beta chains family. As to quaternary structure, has multiple subunits with at least A(3), B(3), C, D, E, F, H, I and proteolipid K(x).

Its subcellular location is the cell membrane. Component of the A-type ATP synthase that produces ATP from ADP in the presence of a proton gradient across the membrane. The B chain is a regulatory subunit. This chain is A-type ATP synthase subunit B, found in Haloferax volcanii (strain ATCC 29605 / DSM 3757 / JCM 8879 / NBRC 14742 / NCIMB 2012 / VKM B-1768 / DS2) (Halobacterium volcanii).